Consider the following 130-residue polypeptide: Fumarate reductase subunit C (130 aa).

3 helical membrane passes run Ala-33 to Gly-53, Phe-60 to Ala-80, and Val-109 to Leu-129.

This sequence belongs to the FrdC family. In terms of assembly, part of an enzyme complex containing four subunits: a flavoprotein (FrdA), an iron-sulfur protein (FrdB), and two hydrophobic anchor proteins (FrdC and FrdD).

The protein resides in the cell inner membrane. Two distinct, membrane-bound, FAD-containing enzymes are responsible for the catalysis of fumarate and succinate interconversion; fumarate reductase is used in anaerobic growth, and succinate dehydrogenase is used in aerobic growth. Anchors the catalytic components of the fumarate reductase complex to the cell inner membrane, binds quinones. The chain is Fumarate reductase subunit C from Photorhabdus laumondii subsp. laumondii (strain DSM 15139 / CIP 105565 / TT01) (Photorhabdus luminescens subsp. laumondii).